The sequence spans 267 residues: Membrane-associated protein Vipp1 (267 aa).

Positions 26-156 (EKVLEQAVID…KANAELQQTL (131 aa)) form a coiled coil. Residues 224 to 252 (GTSAATPQLEAAPVDSSVPANNASQDDAV) are disordered.

It belongs to the PspA/Vipp/IM30 family.

The protein resides in the cell inner membrane. Functionally, required for thylakoid formation. This is Membrane-associated protein Vipp1 from Synechocystis sp. (strain ATCC 27184 / PCC 6803 / Kazusa).